The following is a 494-amino-acid chain: Neuronal acetylcholine receptor subunit alpha-6 (494 aa).

The first 25 residues, 1 to 25, serve as a signal peptide directing secretion; the sequence is MLTSKGQGFLHGGLCLWLCVFTPFF. Residues 26-239 lie on the Extracellular side of the membrane; that stretch reads KGCVGCATEE…ITYSFYIRRL (214 aa). 2 N-linked (GlcNAc...) asparagine glycosylation sites follow: asparagine 54 and asparagine 171. Cystine bridges form between cysteine 158-cysteine 172 and cysteine 222-cysteine 223. 3 helical membrane-spanning segments follow: residues 240-264, 272-290, and 306-327; these read PMFY…VFYL, VTLC…LVIT, and YLLF…VLNI. Topologically, residues 328–465 are cytoplasmic; it reads HYRTPTTHTM…WKYVAMVVDR (138 aa). Serine 401 is modified (phosphoserine). The helical transmembrane segment at 466-484 threads the bilayer; sequence VFLWVFIIVCVFGTAGLFL.

It belongs to the ligand-gated ion channel (TC 1.A.9) family. Acetylcholine receptor (TC 1.A.9.1) subfamily. Alpha-6/CHRNA6 sub-subfamily. Neuronal AChR is composed of two different types of subunits: alpha and non-alpha (beta). CHRNA6/alpha-6 subunit can be combined to CHRNB2/beta-2, CHRNA4/alpha-4 and CHRNB3/beta-3 to give rise to functional receptors. Heteropentamers containing CHRNB3 have an stoichiometry of (CHRNA6:CHRNB2)2:CHRNB3. Interacts with LYPD6.

Its subcellular location is the synaptic cell membrane. The enzyme catalyses Ca(2+)(in) = Ca(2+)(out). The catalysed reaction is K(+)(in) = K(+)(out). It catalyses the reaction Na(+)(in) = Na(+)(out). Its activity is regulated as follows. Activated by a myriad of ligands such as acetylcholine, cytisine and nicotine. CHRNA6 nAChR activity is inhibited by the antagonists alpha-conotoxin MII and PIA, a small disulfide-constrained peptides from cone snails. Component of neuronal acetylcholine receptors (nAChRs) that function as pentameric, ligand-gated cation channels with high calcium permeability among other activities. nAChRs are excitatory neurotrasnmitter receptors formed by a collection of nAChR subunits known to mediate synaptic transmission in the nervous system and the neuromuscular junction. Each nAchR subunit confers differential attributes to channel properties, including activation, deactivation and desensitization kinetics, pH sensitivity, cation permeability, and binding to allosteric modulators. CHRNA6 forms pentameric channels with CHRNB2, CHRNB3 and CHRNA4 that exhibit high sensitivity to ACh and nicotine and are predominantly expressed in only a few brain areas, including dopaminergic neurons, norepirephrine neurons and cells of the visual system. nAChrs containing CHRNA6 subunits mediate endogenous cholinergic modulation of dopamine and gamma-aminobutyric acid (GABA) release in response to nicotine at nerve terminals. The polypeptide is Neuronal acetylcholine receptor subunit alpha-6 (Homo sapiens (Human)).